The primary structure comprises 205 residues: Dephospho-CoA kinase (205 aa).

The 202-residue stretch at 3 to 204 (KVGLTGGIGA…HRAHQPGESQ (202 aa)) folds into the DPCK domain. 11 to 16 (GAGKSE) contributes to the ATP binding site.

Belongs to the CoaE family.

The protein localises to the cytoplasm. The enzyme catalyses 3'-dephospho-CoA + ATP = ADP + CoA + H(+). The protein operates within cofactor biosynthesis; coenzyme A biosynthesis; CoA from (R)-pantothenate: step 5/5. Functionally, catalyzes the phosphorylation of the 3'-hydroxyl group of dephosphocoenzyme A to form coenzyme A. The polypeptide is Dephospho-CoA kinase (Streptomyces avermitilis (strain ATCC 31267 / DSM 46492 / JCM 5070 / NBRC 14893 / NCIMB 12804 / NRRL 8165 / MA-4680)).